The following is a 349-amino-acid chain: MVRAKNWTLKKHFHGHPTDSDFELKTVELPPLNNGEVLLEALFLSVDPYMRLGSKRLKEGDTMMGQQVARVVESKNPAWPVGTLVLAHSGWASHSISDGQQLEKLLTEWPDTLPLSLALGTVGMPGITAYFGLLEICGAKSGDTVLVNAAAGAVGAVVGQIAKIKGCRVVGAAGSEEKVDYLKKIGFDFAFNYKTVKSLEETLKKAAPDGYDCYFDNVGGEFSNTVIRQMKKFGRVAICGAISMYNSTGQLPPGPSPESVLYQEIRMEGFIFNRWKGEVGQKALKELLTWVLEGKIQYREFVIEGFENMPAAFMRMLKGENVGKARSESLKSGTCKPGDHPHDLIFPIT.

Residue threonine 18 is modified to Phosphothreonine. Serine 20 carries the post-translational modification Phosphoserine. NADP(+) contacts are provided by residues 152–155, lysine 178, tyrosine 193, asparagine 217, 239–245, 270–272, and asparagine 321; these read GAVG, CGAISMY, and FIF. At lysine 178 the chain carries N6-(2-hydroxyisobutyryl)lysine; alternate. The residue at position 178 (lysine 178) is an N6-acetyllysine; alternate.

This sequence belongs to the NADP-dependent oxidoreductase L4BD family. In terms of assembly, monomer or homodimer.

The protein resides in the cytoplasm. It carries out the reaction 13,14-dihydro-15-oxo-prostaglandin E1 + NADP(+) = 15-oxoprostaglandin E1 + NADPH + H(+). The enzyme catalyses 13,14-dihydro-15-oxo-prostaglandin E2 + NADP(+) = 15-oxoprostaglandin E2 + NADPH + H(+). It catalyses the reaction 13,14-dihydro-15-oxo-prostaglandin F1alpha + NADP(+) = 15-oxoprostaglandin F1alpha + NADPH + H(+). The catalysed reaction is 13,14-dihydro-15-oxo-PGF2alpha + NADP(+) = 15-oxoprostaglandin F2alpha + NADPH + H(+). It carries out the reaction leukotriene B4 + NADP(+) = 12-oxo-leukotriene B4 + NADPH + H(+). The enzyme catalyses 20-hydroxy-leukotriene B4 + NADP(+) = 12-oxo-20-hydroxy-leukotriene B4 + NADPH + H(+). It catalyses the reaction 6-trans-leukotriene B4 + NADP(+) = 12-oxo-(5S)-hydroxy-(6E,8E,10E,14Z)-eicosatetraenoate + NADPH + H(+). The catalysed reaction is (5S,12S)-dihydroxy-(6E,10E,12E,14Z)-eicosatetraenoate + NADP(+) = 12-oxo-(5S)-hydroxy-(6E,8E,10E,14Z)-eicosatetraenoate + NADPH + H(+). It carries out the reaction an n-alkanal + NADP(+) = an alk-2-enal + NADPH + H(+). The enzyme catalyses hexanal + NADP(+) = (E)-hex-2-enal + NADPH + H(+). It catalyses the reaction octanal + NADP(+) = (2E)-octenal + NADPH + H(+). The catalysed reaction is decanal + NADP(+) = (2E)-decenal + NADPH + H(+). It carries out the reaction dodecanal + NADP(+) = (2E)-dodecenal + NADPH + H(+). The enzyme catalyses 4-hydroxynonanal + NADP(+) = (E)-4-hydroxynon-2-enal + NADPH + H(+). It catalyses the reaction pentan-2-one + NADP(+) = (E)-pent-3-en-2-one + NADPH + H(+). The catalysed reaction is nonan-2-one + NADP(+) = (3E)-nonen-2-one + NADPH + H(+). Its function is as follows. NAD(P)H-dependent oxidoreductase involved in metabolic inactivation of pro- and anti-inflammatory eicosanoids: prostaglandins (PG), leukotrienes (LT) and lipoxins (LX). Catalyzes with high efficiency the reduction of the 13,14 double bond of 15-oxoPGs, including 15-oxo-PGE1, 15-oxo-PGE2, 15-oxo-PGF1-alpha and 15-oxo-PGF2-alpha. Catalyzes with lower efficiency the oxidation of the hydroxyl group at C12 of LTB4 and its derivatives, converting them into biologically less active 12-oxo-LTB4 metabolites. Reduces 15-oxo-LXA4 to 13,14 dihydro-15-oxo-LXA4, enhancing neutrophil recruitment at the inflammatory site. Plays a role in metabolic detoxification of alkenals and ketones. Reduces alpha,beta-unsaturated alkenals and ketones, particularly those with medium-chain length, showing highest affinity toward (2E)-decenal and (3E)-3-nonen-2-one. May inactivate 4-hydroxy-2-nonenal, a cytotoxic lipid constituent of oxidized low-density lipoprotein particles. The sequence is that of Prostaglandin reductase 1 (PTGR1) from Oryctolagus cuniculus (Rabbit).